The primary structure comprises 431 residues: Glutamate-1-semialdehyde 2,1-aminomutase (431 aa).

N6-(pyridoxal phosphate)lysine is present on lysine 265.

The protein belongs to the class-III pyridoxal-phosphate-dependent aminotransferase family. HemL subfamily. In terms of assembly, homodimer. Pyridoxal 5'-phosphate is required as a cofactor.

Its subcellular location is the cytoplasm. The catalysed reaction is (S)-4-amino-5-oxopentanoate = 5-aminolevulinate. The protein operates within porphyrin-containing compound metabolism; protoporphyrin-IX biosynthesis; 5-aminolevulinate from L-glutamyl-tRNA(Glu): step 2/2. The chain is Glutamate-1-semialdehyde 2,1-aminomutase from Aliivibrio salmonicida (strain LFI1238) (Vibrio salmonicida (strain LFI1238)).